Reading from the N-terminus, the 87-residue chain is Omega-lycotoxin-Am1g (87 aa).

Residues 1–17 form the signal peptide; the sequence is MKLSIFFVLFFIAIAYC. The propeptide occupies 18 to 40; that stretch reads QPEFLDDEEDEVEETLPVAEEGR. 4 disulfides stabilise this stretch: Cys44–Cys59, Cys51–Cys64, Cys58–Cys84, and Cys66–Cys82.

Belongs to the neurotoxin omega-lctx family. In terms of tissue distribution, expressed by the venom gland.

It is found in the secreted. Modulates Cav2.1/CACNA1A voltage-gated calcium channels (P/Q-type currents) in rat cerebellar Purkinje cells and hippocampal CA1-CA3 neurons. At saturating concentrations (&gt;10 nM) decelerates activation kinetics and slightly increases peak amplitude without affecting deactivation kinetics. In vivo, does not cause death when intravenously injected into mice. In rat models, through its activity on Cav2.1/CACNA1A, has an ameliorative effect on memory defects provoked by hyperstimulation of N-methyl-D-aspartate receptors (NMDARs) in the hippocampus. The chain is Omega-lycotoxin-Am1g from Alopecosa marikovskyi (Wolf spider).